Here is a 542-residue protein sequence, read N- to C-terminus: Chondroitin sulfate N-acetylgalactosaminyltransferase 2 (542 aa).

Over 1–13 (MSRRGSILHSRTQ) the chain is Cytoplasmic. The helical; Signal-anchor for type II membrane protein transmembrane segment at 14 to 34 (WLLLGLALLFSLVLFMYLLEC) threads the bilayer. At 35 to 542 (APQTDGNASL…AYRTNSETAG (508 aa)) the chain is on the lumenal side. A glycan (N-linked (GlcNAc...) asparagine) is linked at N41. Positions 59–105 (ALLQEQEEHYQTRATSLKRQIAQLKQELQDMSEKMRALQERKKLGAN) form a coiled coil. An N-linked (GlcNAc...) asparagine glycan is attached at N333. D369 and H486 together coordinate a divalent metal cation.

It belongs to the chondroitin N-acetylgalactosaminyltransferase family.

The protein resides in the golgi apparatus. It localises to the golgi stack membrane. The catalysed reaction is 3-O-(beta-D-GlcA-(1-&gt;3)-beta-D-Gal-(1-&gt;3)-beta-D-Gal-(1-&gt;4)-beta-D-Xyl)-L-seryl-[protein] + UDP-N-acetyl-alpha-D-galactosamine = 3-O-(beta-D-GalNAc-(1-&gt;4)-beta-D-GlcA-(1-&gt;3)-beta-D-Gal-(1-&gt;3)-beta-D-Gal-(1-&gt;4)-beta-D-Xyl)-L-seryl-[protein] + UDP + H(+). Transfers 1,4-N-acetylgalactosamine (GalNAc) from UDP-GalNAc to the non-reducing end of glucuronic acid (GlcUA). Required for addition of the first GalNAc to the core tetrasaccharide linker and for elongation of chondroitin chains. In Mus musculus (Mouse), this protein is Chondroitin sulfate N-acetylgalactosaminyltransferase 2 (Csgalnact2).